A 254-amino-acid chain; its full sequence is Type III pantothenate kinase (254 aa).

An ATP-binding site is contributed by Asp6–Thr13. Residues Tyr100 and Gly107–Arg110 each bind substrate. Asp109 acts as the Proton acceptor in catalysis. Asp129 is a K(+) binding site. Thr132 contacts ATP. Substrate is bound at residue Thr184.

The protein belongs to the type III pantothenate kinase family. Homodimer. The cofactor is NH4(+). K(+) is required as a cofactor.

It is found in the cytoplasm. It catalyses the reaction (R)-pantothenate + ATP = (R)-4'-phosphopantothenate + ADP + H(+). It participates in cofactor biosynthesis; coenzyme A biosynthesis; CoA from (R)-pantothenate: step 1/5. Its function is as follows. Catalyzes the phosphorylation of pantothenate (Pan), the first step in CoA biosynthesis. The polypeptide is Type III pantothenate kinase (Anaeromyxobacter dehalogenans (strain 2CP-C)).